The chain runs to 686 residues: MIRPLCSKIIISYIFAISQFLLAANAWSPTDSYVPGTVSCPDDINLVREATSISQNESAWLEKRNKVTSVALKDFLTRATANFSDSSEVLSKLFNDGNSENLPKIAVAVSGGGYRSMLTGAGVLAAMDNRTEGAYEHGLGGLLQSTTYLSGASGGNWLVGTLALNNWTSVQDILNNMQNDDSIWDLSDSIVTPGGINIFKTAKRWDHISNAVESKQNADYNTSLADIWGRALAYNFFPSLNRGGIGLTWSSIRDFPVFQNAEMPFPISVADGRYPGTKVINLNATVFEFNPFEMGSWDPSLNSFANVKYLGTNVSNGVPLERGKCTAGFDNAGFIMGTSSTLFNQFLLRINSTHLPSFITRLARHFLKDLSQDFNDIAVYSPNPFKDTKFLDSDYTTSIVDSDSLFLVDGGEDDENVPVLPLIQKERDVDIIFAVDNSADMRLAWPDGSSLVHTYERQFVKQGQGMSFPYVPDTNTFVNLGLNKKPTFFGCDANNLTDLQYIPPLVVYLPNAEYSFNSNQSAFKLSYSESQRRSMIQNGFEIATRNNFTDDPEFMGCVGCAIIRRKQQALNITLPPECETCFKNYCWNGTLDTTPLPDVEKDVHHSFINVNSFNSSIGQEESLYAGSSASQSSSSSSSSSSSSEIPSATATLEKKAATNSGSHLSGISVKFSAMIMLTLLMFTGAV.

Residues 1–26 form the signal peptide; that stretch reads MIRPLCSKIIISYIFAISQFLLAANA. The PLA2c domain occupies 39–592; that stretch reads SCPDDINLVR…KNYCWNGTLD (554 aa). N-linked (GlcNAc...) asparagine glycans are attached at residues Asn-56, Asn-82, Asn-129, Asn-166, Asn-221, Asn-283, Asn-313, Asn-351, Asn-495, Asn-519, Asn-547, Asn-571, Asn-588, and Asn-614. The GPI-anchor amidated asparagine moiety is linked to residue Asn-659. The propeptide at 660 to 686 is removed in mature form; the sequence is SGSHLSGISVKFSAMIMLTLLMFTGAV.

Belongs to the lysophospholipase family.

It localises to the cell membrane. The enzyme catalyses a 1-acyl-sn-glycero-3-phosphocholine + H2O = sn-glycerol 3-phosphocholine + a fatty acid + H(+). Functionally, sequentially removes both fatty acyl groups from diacylglycerophospholipids and therefore has both phospholipase A and lysophospholipase activities. Substrate preference is phosphatidylserine &gt; phosphatidylinositol. Does not cleave phosphatidylcholine, phosphatidylethanolamine, phosphatidic acid and phosphatidylinositol-bisphosphate. Mainly responsible for the degradation of phosphatidylinositol in vivo. This is Lysophospholipase 3 (PLB3) from Saccharomyces cerevisiae (strain ATCC 204508 / S288c) (Baker's yeast).